The primary structure comprises 152 residues: Nucleoside diphosphate kinase (152 aa).

The ATP site is built by Lys-11, Phe-59, Arg-87, Thr-93, Arg-104, and Asn-114. Catalysis depends on His-117, which acts as the Pros-phosphohistidine intermediate.

It belongs to the NDK family. Homotetramer. It depends on Mg(2+) as a cofactor.

The protein resides in the cytoplasm. It carries out the reaction a 2'-deoxyribonucleoside 5'-diphosphate + ATP = a 2'-deoxyribonucleoside 5'-triphosphate + ADP. The catalysed reaction is a ribonucleoside 5'-diphosphate + ATP = a ribonucleoside 5'-triphosphate + ADP. Its function is as follows. Major role in the synthesis of nucleoside triphosphates other than ATP. The ATP gamma phosphate is transferred to the NDP beta phosphate via a ping-pong mechanism, using a phosphorylated active-site intermediate. This Prochlorococcus marinus (strain MIT 9313) protein is Nucleoside diphosphate kinase.